A 327-amino-acid polypeptide reads, in one-letter code: 2-methoxy-6-polyprenyl-1,4-benzoquinol methylase, mitochondrial (327 aa).

Residues 1–42 (MAAPGSCALWSYCGRGWSRAMRGCQLLGLRSSWPGDLLSARL) constitute a mitochondrion transit peptide. S-adenosyl-L-methionine-binding positions include threonine 117, aspartate 171, and 199–200 (DA).

The protein belongs to the class I-like SAM-binding methyltransferase superfamily. MenG/UbiE family. Component of a multi-subunit COQ enzyme complex, composed of at least COQ3, COQ4, COQ5, COQ6, COQ7 and COQ9. Interacts with PYURF; the interaction is direct, stabilizes COQ5 protein and associates PYURF with COQ enzyme complex. In terms of tissue distribution, widely expressed, with highest levels in liver, lung, placenta and skeletal muscle.

Its subcellular location is the mitochondrion inner membrane. It carries out the reaction 2-methoxy-6-(all-trans-decaprenyl)benzene-1,4-diol + S-adenosyl-L-methionine = 5-methoxy-2-methyl-3-(all-trans-decaprenyl)benzene-1,4-diol + S-adenosyl-L-homocysteine + H(+). It participates in cofactor biosynthesis; ubiquinone biosynthesis. In terms of biological role, methyltransferase required for the conversion of 2-decaprenyl-6-methoxy-1,4-benzoquinol (DDMQH2) to 2-decaprenyl-3-methyl-6-methoxy-1,4-benzoquinol (DMQH2). In Homo sapiens (Human), this protein is 2-methoxy-6-polyprenyl-1,4-benzoquinol methylase, mitochondrial.